Consider the following 172-residue polypeptide: VLLDGNGEVVQNGGTYYLLPQVWAQGGGVQLAKTGEETCPLTVVQSPNELSDGKPIRIESRLRSAFIPDDDKVRIGFAYAPKCAPSPWWTVVEDEQEGLSVKLSEDESTQFDYPFKFEQVSDQLHSYKLLYCEGKHEKCASIGINRDQKGYRRLVVTEDYPLTVVLKKDESS.

2 disulfide bridges follow: C39-C83 and C132-C139.

Belongs to the protease inhibitor I3 (leguminous Kunitz-type inhibitor) family.

Inhibition of trypsin. This is Trypsin inhibitor DE-3 from Erythrina caffra (Kaffir tree).